The chain runs to 73 residues: UPF0346 protein SSP1318 (73 aa).

This sequence belongs to the UPF0346 family.

The polypeptide is UPF0346 protein SSP1318 (Staphylococcus saprophyticus subsp. saprophyticus (strain ATCC 15305 / DSM 20229 / NCIMB 8711 / NCTC 7292 / S-41)).